The following is a 238-amino-acid chain: Peroxisomal coenzyme A diphosphatase NUDT7 (238 aa).

At K20 the chain carries N6-succinyllysine. A Nudix hydrolase domain is found at 37–172 (YNKYSVLLPL…VTRLGHRFIN (136 aa)). The short motif at 77–98 (KRDPTDMDDAATALREAQEEVG) is the Nudix box element. Residues E92 and E96 each coordinate Mg(2+). The short motif at 236–238 (SRL) is the Microbody targeting signal element.

This sequence belongs to the Nudix hydrolase family. PCD1 subfamily. In terms of assembly, monomer. Mn(2+) is required as a cofactor. It depends on Mg(2+) as a cofactor. Expressed in liver, kidney, pancreas, pituitary, small intestine, spleen, heart and placenta. Weakly expressed in brain.

It localises to the peroxisome. It catalyses the reaction hexanoyl-CoA + H2O = hexanoyl-4'-phosphopantetheine + adenosine 3',5'-bisphosphate + 2 H(+). It carries out the reaction octanoyl-CoA + H2O = S-octanoyl-4'-phosphopantetheine + adenosine 3',5'-bisphosphate + 2 H(+). The enzyme catalyses butanoyl-CoA + H2O = S-butanoyl-4'-phosphopantetheine + adenosine 3',5'-bisphosphate + 2 H(+). The catalysed reaction is decanoyl-CoA + H2O = decanoyl-4'-phosphopantetheine + adenosine 3',5'-bisphosphate + 2 H(+). It catalyses the reaction dodecanoyl-CoA + H2O = S-dodecanoyl-4'-phosphopantetheine + adenosine 3',5'-bisphosphate + 2 H(+). It carries out the reaction tetradecanoyl-CoA + H2O = tetradecanoyl-4'-phosphopantetheine + adenosine 3',5'-bisphosphate + 2 H(+). The enzyme catalyses choloyl-CoA + H2O = S-choloyl-4'-phosphopantetheine + adenosine 3',5'-bisphosphate + 2 H(+). The catalysed reaction is 3alpha,7alpha,12alpha-trihydroxy-5beta-cholestan-26-oyl-CoA + H2O = 3alpha,7alpha,12alpha-trihydroxy-5beta-cholestan-26-oyl-4'-phosphopantetheine + adenosine 3',5'-bisphosphate + 2 H(+). It catalyses the reaction acetyl-CoA + H2O = S-acetyl-4'-phosphopantetheine + adenosine 3',5'-bisphosphate + 2 H(+). It carries out the reaction CoA + H2O = (R)-4'-phosphopantetheine + adenosine 3',5'-bisphosphate + 2 H(+). The enzyme catalyses propanoyl-CoA + H2O = propanoyl-4'-phosphopantetheine + adenosine 3',5'-bisphosphate + 2 H(+). The catalysed reaction is malonyl-CoA + H2O = malonyl-4'-phosphopantetheine + adenosine 3',5'-bisphosphate + 2 H(+). It catalyses the reaction succinyl-CoA + H2O = succinyl-4'-phosphopantetheine + adenosine 3',5'-bisphosphate + 2 H(+). It carries out the reaction a 5'-end CoA-ribonucleoside in mRNA + H2O = a 5'-end phospho-adenosine-phospho-ribonucleoside in mRNA + (R)-4'-phosphopantetheine + 2 H(+). Its activity is regulated as follows. Inhibited by fluoride. Functionally, fatty acyl-coenzyme A (CoA) diphosphatase that hydrolyzes fatty acyl-CoA to yield acyl-4'-phosphopantetheine and adenosine 3',5'-bisphosphate. Cleaves CoA, CoA esters and oxidized CoA with similar efficiencies. Preferentially hydrolyzes medium-chain acyl-CoAs and bile acid-CoAs. Has no activity toward NDP-sugars, CDP-alcohols, (deoxy)nucleoside 5'-triphosphates, nucleoside 5'-di or monophosphates, diadenosine polyphosphates, NAD, NADH, NADP, NADPH or thymidine-5'-monophospho-p-nitrophenyl ester. May be required to eliminate oxidized CoA from peroxisomes, or regulate CoA and acyl-CoA levels in this organelle in response to metabolic demand. Does not play a role in U8 snoRNA decapping activity. Binds U8 snoRNA. Exhibits decapping activity towards dpCoA-capped RNAs in vitro. The chain is Peroxisomal coenzyme A diphosphatase NUDT7 from Homo sapiens (Human).